Here is a 431-residue protein sequence, read N- to C-terminus: Nuclear receptor subfamily 1 group I member 2 (431 aa).

The nuclear receptor DNA-binding region spans 35–104; that stretch reads LQICRVCGDK…RLRKCLESGM (70 aa). NR C4-type zinc fingers lie at residues 38 to 58 and 74 to 99; these read CRVC…CEGC and CPFR…LRKC. Residues 63–89 carry the Bipartite nuclear localization signal motif; that stretch reads RRAMKRNVRLRCPFRKGTCEITRKTRR. A hinge region spans residues 105-142; it reads KKEMIMSDAAVEQRRALIKRKKREKIEAPPPGGQGLTE. One can recognise an NR LBD domain in the interval 143–430; it reads EQQALIQELM…LMQELFSSTD (288 aa). Residues serine 244 and 282 to 285 each bind hyperforin; that span reads ILRF.

Belongs to the nuclear hormone receptor family. NR1 subfamily. Heterodimer with RXRA. Interacts with NCOA1. Interacts (via domain NR LBD) with CRY1 and CRY2 in a ligand-dependent manner.

The protein resides in the nucleus. Nuclear receptor that binds and is activated by a variety of endogenous and xenobiotic compounds. Transcription factor that activates the transcription of multiple genes involved in the metabolism and secretion of potentially harmful xenobiotics, endogenous compounds and drugs. Response to specific ligands is species-specific, due to differences in the ligand-binding domain. Binds to a response element in the promoters of the CYP3A4 and ABCB1/MDR1 genes. Activated by naturally occurring steroids such as pregnenolone and progesterone, the cholesterol metabolite 5-beta-cholestane-3-alpha,7-alpha,12-alpha-triol, synthetic glucocorticoids and antiglucocorticoids and 16-alpha-carbonitrile (PCN). The polypeptide is Nuclear receptor subfamily 1 group I member 2 (Nr1i2) (Mus musculus (Mouse)).